The following is a 286-amino-acid chain: Bifunctional protein FolD (286 aa).

NADP(+) contacts are provided by residues 165–167 (GRS) and serine 190.

Belongs to the tetrahydrofolate dehydrogenase/cyclohydrolase family. In terms of assembly, homodimer.

It carries out the reaction (6R)-5,10-methylene-5,6,7,8-tetrahydrofolate + NADP(+) = (6R)-5,10-methenyltetrahydrofolate + NADPH. It catalyses the reaction (6R)-5,10-methenyltetrahydrofolate + H2O = (6R)-10-formyltetrahydrofolate + H(+). The protein operates within one-carbon metabolism; tetrahydrofolate interconversion. In terms of biological role, catalyzes the oxidation of 5,10-methylenetetrahydrofolate to 5,10-methenyltetrahydrofolate and then the hydrolysis of 5,10-methenyltetrahydrofolate to 10-formyltetrahydrofolate. This Paraburkholderia phytofirmans (strain DSM 17436 / LMG 22146 / PsJN) (Burkholderia phytofirmans) protein is Bifunctional protein FolD.